The primary structure comprises 441 residues: 4-hydroxy-3-methylbut-2-en-1-yl diphosphate synthase (flavodoxin) (441 aa).

[4Fe-4S] cluster-binding residues include C320, C323, C366, and E373.

This sequence belongs to the IspG family. It depends on [4Fe-4S] cluster as a cofactor.

The enzyme catalyses (2E)-4-hydroxy-3-methylbut-2-enyl diphosphate + oxidized [flavodoxin] + H2O + 2 H(+) = 2-C-methyl-D-erythritol 2,4-cyclic diphosphate + reduced [flavodoxin]. Its pathway is isoprenoid biosynthesis; isopentenyl diphosphate biosynthesis via DXP pathway; isopentenyl diphosphate from 1-deoxy-D-xylulose 5-phosphate: step 5/6. Its function is as follows. Converts 2C-methyl-D-erythritol 2,4-cyclodiphosphate (ME-2,4cPP) into 1-hydroxy-2-methyl-2-(E)-butenyl 4-diphosphate. This Rhodopseudomonas palustris (strain ATCC BAA-98 / CGA009) protein is 4-hydroxy-3-methylbut-2-en-1-yl diphosphate synthase (flavodoxin).